Here is a 104-residue protein sequence, read N- to C-terminus: Large ribosomal subunit protein uL24 (104 aa).

It belongs to the universal ribosomal protein uL24 family. As to quaternary structure, part of the 50S ribosomal subunit.

Its function is as follows. One of two assembly initiator proteins, it binds directly to the 5'-end of the 23S rRNA, where it nucleates assembly of the 50S subunit. In terms of biological role, one of the proteins that surrounds the polypeptide exit tunnel on the outside of the subunit. This is Large ribosomal subunit protein uL24 from Rhodopseudomonas palustris (strain BisA53).